Here is a 699-residue protein sequence, read N- to C-terminus: Elongation factor G (699 aa).

Positions Asn8–Val290 constitute a tr-type G domain. GTP-binding positions include Ala17–Thr24, Asp88–His92, and Asn142–Asp145.

The protein belongs to the TRAFAC class translation factor GTPase superfamily. Classic translation factor GTPase family. EF-G/EF-2 subfamily.

Its subcellular location is the cytoplasm. Its function is as follows. Catalyzes the GTP-dependent ribosomal translocation step during translation elongation. During this step, the ribosome changes from the pre-translocational (PRE) to the post-translocational (POST) state as the newly formed A-site-bound peptidyl-tRNA and P-site-bound deacylated tRNA move to the P and E sites, respectively. Catalyzes the coordinated movement of the two tRNA molecules, the mRNA and conformational changes in the ribosome. This chain is Elongation factor G, found in Dichelobacter nodosus (strain VCS1703A).